The primary structure comprises 457 residues: Argininosuccinate lyase (457 aa).

The protein belongs to the lyase 1 family. Argininosuccinate lyase subfamily.

The protein resides in the cytoplasm. It catalyses the reaction 2-(N(omega)-L-arginino)succinate = fumarate + L-arginine. The protein operates within amino-acid biosynthesis; L-arginine biosynthesis; L-arginine from L-ornithine and carbamoyl phosphate: step 3/3. This is Argininosuccinate lyase from Haemophilus influenzae (strain PittGG).